The sequence spans 301 residues: Probable serine acetyltransferase 3 (301 aa).

Residues isoleucine 280–aspartate 301 are disordered.

Belongs to the transferase hexapeptide repeat family. As to quaternary structure, homomultimer.

The catalysed reaction is L-serine + acetyl-CoA = O-acetyl-L-serine + CoA. It participates in amino-acid biosynthesis; L-cysteine biosynthesis; L-cysteine from L-serine: step 1/2. The chain is Probable serine acetyltransferase 3 (SAT3) from Oryza sativa subsp. japonica (Rice).